We begin with the raw amino-acid sequence, 184 residues long: UPF0149 protein PP_5201 (184 aa).

The protein belongs to the UPF0149 family.

In Pseudomonas putida (strain ATCC 47054 / DSM 6125 / CFBP 8728 / NCIMB 11950 / KT2440), this protein is UPF0149 protein PP_5201.